The sequence spans 450 residues: tRNA modification GTPase MnmE (450 aa).

The (6S)-5-formyl-5,6,7,8-tetrahydrofolate site is built by arginine 25, glutamate 86, and arginine 126. A TrmE-type G domain is found at 221 to 373 (GLRVALVGRP…LVQALLERCG (153 aa)). Residue asparagine 231 participates in K(+) binding. GTP is bound by residues 231–236 (NVGKSS), 250–256 (TELPGTT), 275–278 (DTAG), and 336–339 (NKAD). Position 235 (serine 235) interacts with Mg(2+). Residues threonine 250, leucine 252, and threonine 255 each contribute to the K(+) site. Position 256 (threonine 256) interacts with Mg(2+). Lysine 450 is a (6S)-5-formyl-5,6,7,8-tetrahydrofolate binding site.

This sequence belongs to the TRAFAC class TrmE-Era-EngA-EngB-Septin-like GTPase superfamily. TrmE GTPase family. Homodimer. Heterotetramer of two MnmE and two MnmG subunits. K(+) serves as cofactor.

Its subcellular location is the cytoplasm. Functionally, exhibits a very high intrinsic GTPase hydrolysis rate. Involved in the addition of a carboxymethylaminomethyl (cmnm) group at the wobble position (U34) of certain tRNAs, forming tRNA-cmnm(5)s(2)U34. This Parasynechococcus marenigrum (strain WH8102) protein is tRNA modification GTPase MnmE.